Here is an 852-residue protein sequence, read N- to C-terminus: Eukaryotic translation initiation factor 3 subunit C (852 aa).

The interval 1 to 90 (MSRFFVSGYP…DSDSDDEGRK (90 aa)) is disordered. The segment covering 14–57 (SSEEEDLLSSSEEELLSSESEEDNFSSDSEFGNDSDNDSSDSDS) has biased composition (acidic residues). In terms of domain architecture, PCI spans 597–772 (FHMHINLELL…SFVNFTTNDH (176 aa)). The segment covering 798–809 (TASNGYSRKQPM) has biased composition (polar residues). Residues 798–852 (TASNGYSRKQPMQQQQQQQQQQQQQKEQKELLHEENNRFRYANVNANNDEFQTTA) are disordered. The span at 810-822 (QQQQQQQQQQQQQ) shows a compositional bias: low complexity. The span at 823-835 (KEQKELLHEENNR) shows a compositional bias: basic and acidic residues. The span at 841–852 (VNANNDEFQTTA) shows a compositional bias: polar residues.

This sequence belongs to the eIF-3 subunit C family. In terms of assembly, component of the eukaryotic translation initiation factor 3 (eIF-3) complex.

It localises to the cytoplasm. Its function is as follows. Component of the eukaryotic translation initiation factor 3 (eIF-3) complex, which is involved in protein synthesis of a specialized repertoire of mRNAs and, together with other initiation factors, stimulates binding of mRNA and methionyl-tRNAi to the 40S ribosome. The eIF-3 complex specifically targets and initiates translation of a subset of mRNAs involved in cell proliferation. The protein is Eukaryotic translation initiation factor 3 subunit C of Debaryomyces hansenii (strain ATCC 36239 / CBS 767 / BCRC 21394 / JCM 1990 / NBRC 0083 / IGC 2968) (Yeast).